The chain runs to 96 residues: Pyrimidine/purine nucleoside phosphorylase (96 aa).

Belongs to the nucleoside phosphorylase PpnP family.

It catalyses the reaction a purine D-ribonucleoside + phosphate = a purine nucleobase + alpha-D-ribose 1-phosphate. It carries out the reaction adenosine + phosphate = alpha-D-ribose 1-phosphate + adenine. The enzyme catalyses cytidine + phosphate = cytosine + alpha-D-ribose 1-phosphate. The catalysed reaction is guanosine + phosphate = alpha-D-ribose 1-phosphate + guanine. It catalyses the reaction inosine + phosphate = alpha-D-ribose 1-phosphate + hypoxanthine. It carries out the reaction thymidine + phosphate = 2-deoxy-alpha-D-ribose 1-phosphate + thymine. The enzyme catalyses uridine + phosphate = alpha-D-ribose 1-phosphate + uracil. The catalysed reaction is xanthosine + phosphate = alpha-D-ribose 1-phosphate + xanthine. In terms of biological role, catalyzes the phosphorolysis of diverse nucleosides, yielding D-ribose 1-phosphate and the respective free bases. Can use uridine, adenosine, guanosine, cytidine, thymidine, inosine and xanthosine as substrates. Also catalyzes the reverse reactions. The polypeptide is Pyrimidine/purine nucleoside phosphorylase (Erwinia tasmaniensis (strain DSM 17950 / CFBP 7177 / CIP 109463 / NCPPB 4357 / Et1/99)).